We begin with the raw amino-acid sequence, 307 residues long: Glutaminase (307 aa).

Residues serine 66, asparagine 116, glutamate 160, asparagine 167, tyrosine 191, tyrosine 243, and valine 261 each coordinate substrate.

It belongs to the glutaminase family. In terms of assembly, homotetramer.

It carries out the reaction L-glutamine + H2O = L-glutamate + NH4(+). The chain is Glutaminase from Pseudoalteromonas translucida (strain TAC 125).